A 225-amino-acid chain; its full sequence is UPF0173 metal-dependent hydrolase PF1764 (225 aa).

The protein belongs to the UPF0173 family.

In Pyrococcus furiosus (strain ATCC 43587 / DSM 3638 / JCM 8422 / Vc1), this protein is UPF0173 metal-dependent hydrolase PF1764.